Consider the following 374-residue polypeptide: Formylglycine-generating enzyme (374 aa).

The first 33 residues, 1 to 33 (MAAPALGPARGCGAELTLVLLLSLFLLLGWAAG), serve as a signal peptide directing secretion. Residues cysteine 50 and cysteine 52 are joined by a disulfide bond. The tract at residues 57–102 (RPGAQGSSAAAHRYSREANAPGSVPGGRPSPPTKMVPIPAGVFTMG) is disordered. A Ca(2+)-binding site is contributed by glutamate 130. N-linked (GlcNAc...) asparagine glycosylation occurs at asparagine 141. 2 cysteine pairs are disulfide-bonded: cysteine 218–cysteine 365 and cysteine 235–cysteine 346. Ca(2+) contacts are provided by asparagine 259, isoleucine 260, aspartate 273, phenylalanine 275, asparagine 293, glycine 296, alanine 298, and glutamate 300. Positions 336 and 341 each coordinate Cu(2+). Residues 341-360 (CYRYRCAARSQNTPDSSASN) form an interaction with sulfatases region.

This sequence belongs to the sulfatase-modifying factor family. As to quaternary structure, monomer, homodimer and heterodimer with SUMF2. Requires Cu(2+) as cofactor. In terms of processing, N-glycosylated. Contains high-mannose-type oligosaccharides.

The protein localises to the endoplasmic reticulum lumen. The catalysed reaction is L-cysteinyl-[sulfatase] + 2 a thiol + O2 = an organic disulfide + 3-oxo-L-alanyl-[sulfatase] + hydrogen sulfide + H2O + H(+). The protein operates within protein modification; sulfatase oxidation. In terms of biological role, oxidase that catalyzes the conversion of cysteine to 3-oxoalanine on target proteins, using molecular oxygen and an unidentified reducing agent. 3-oxoalanine modification, which is also named formylglycine (fGly), occurs in the maturation of arylsulfatases and some alkaline phosphatases that use the hydrated form of 3-oxoalanine as a catalytic nucleophile. Known substrates include GALNS, ARSA, STS and ARSE. In Bos taurus (Bovine), this protein is Formylglycine-generating enzyme.